The sequence spans 321 residues: Beta-ketoacyl-[acyl-carrier-protein] synthase III (321 aa).

Catalysis depends on residues C115 and H248. The tract at residues 249-253 (QANIR) is ACP-binding. N278 is a catalytic residue.

It belongs to the thiolase-like superfamily. FabH family. Homodimer.

The protein resides in the cytoplasm. It catalyses the reaction malonyl-[ACP] + acetyl-CoA + H(+) = 3-oxobutanoyl-[ACP] + CO2 + CoA. It participates in lipid metabolism; fatty acid biosynthesis. Functionally, catalyzes the condensation reaction of fatty acid synthesis by the addition to an acyl acceptor of two carbons from malonyl-ACP. Catalyzes the first condensation reaction which initiates fatty acid synthesis and may therefore play a role in governing the total rate of fatty acid production. Possesses both acetoacetyl-ACP synthase and acetyl transacylase activities. Its substrate specificity determines the biosynthesis of branched-chain and/or straight-chain of fatty acids. The protein is Beta-ketoacyl-[acyl-carrier-protein] synthase III of Azoarcus sp. (strain BH72).